Here is a 360-residue protein sequence, read N- to C-terminus: tRNA (guanine-N(7)-)-methyltransferase (360 aa).

Positions 1–32 (MTPPPPKRQKRDEYRKATAEAASQPGPSDVAE) are disordered. S-adenosyl-L-methionine contacts are provided by residues Gly-99 and 122-123 (EI). A disordered region spans residues 177–196 (ADAASPVLSTDTEHTPTTLV). Over residues 183–196 (VLSTDTEHTPTTLV) the composition is skewed to polar residues. Residues 209 to 210 (NT) and Cys-229 contribute to the S-adenosyl-L-methionine site. Asp-232 is an active-site residue. 332–334 (TEE) provides a ligand contact to S-adenosyl-L-methionine.

It belongs to the class I-like SAM-binding methyltransferase superfamily. TrmB family. Forms a complex with trm82.

It is found in the nucleus. It carries out the reaction guanosine(46) in tRNA + S-adenosyl-L-methionine = N(7)-methylguanosine(46) in tRNA + S-adenosyl-L-homocysteine. It participates in tRNA modification; N(7)-methylguanine-tRNA biosynthesis. In terms of biological role, catalyzes the formation of N(7)-methylguanine at position 46 (m7G46) in tRNA. The chain is tRNA (guanine-N(7)-)-methyltransferase (trm8) from Neosartorya fischeri (strain ATCC 1020 / DSM 3700 / CBS 544.65 / FGSC A1164 / JCM 1740 / NRRL 181 / WB 181) (Aspergillus fischerianus).